Here is a 758-residue protein sequence, read N- to C-terminus: 5-methyltetrahydropteroyltriglutamate--homocysteine methyltransferase (758 aa).

5-methyltetrahydropteroyltri-L-glutamate-binding positions include 16-19 (RELK) and Lys116. Residues 436–438 (IGS) and Glu489 contribute to the L-homocysteine site. L-methionine is bound by residues 436 to 438 (IGS) and Glu489. 5-methyltetrahydropteroyltri-L-glutamate is bound by residues 520-521 (RC) and Trp566. Asp604 serves as a coordination point for L-homocysteine. Asp604 is an L-methionine binding site. Glu610 provides a ligand contact to 5-methyltetrahydropteroyltri-L-glutamate. His646, Cys648, and Glu670 together coordinate Zn(2+). Catalysis depends on His699, which acts as the Proton donor. Cys731 is a Zn(2+) binding site.

Belongs to the vitamin-B12 independent methionine synthase family. Requires Zn(2+) as cofactor.

It catalyses the reaction 5-methyltetrahydropteroyltri-L-glutamate + L-homocysteine = tetrahydropteroyltri-L-glutamate + L-methionine. It participates in amino-acid biosynthesis; L-methionine biosynthesis via de novo pathway; L-methionine from L-homocysteine (MetE route): step 1/1. Catalyzes the transfer of a methyl group from 5-methyltetrahydrofolate to homocysteine resulting in methionine formation. The chain is 5-methyltetrahydropteroyltriglutamate--homocysteine methyltransferase from Xylella fastidiosa (strain M12).